We begin with the raw amino-acid sequence, 628 residues long: tRNA (carboxymethyluridine(34)-5-O)-methyltransferase alkbh8 (628 aa).

The 81-residue stretch at 43–123 (QSLVVANGGL…ITLYLSFVEK (81 aa)) folds into the RRM domain. The 118-residue stretch at 218–335 (DPDQLTINQY…RTSFTFRKVR (118 aa)) folds into the Fe2OG dioxygenase domain. 225 to 227 (NQY) serves as a coordination point for 2-oxoglutarate. Residues H236 and D238 each coordinate Fe cation. Zn(2+) is bound at residue H240. Residue H290 coordinates Fe cation. 2-oxoglutarate-binding residues include R326 and R332. Zn(2+) is bound by residues C339, C341, and C347. Residues 410 to 628 (ADVGCGNGKY…GNWCVILEKL (219 aa)) are methyltransferase domain. The interval 563 to 582 (PTNKSKVTPENKEQNEKEHG) is disordered. The segment covering 569–582 (VTPENKEQNEKEHG) has biased composition (basic and acidic residues).

This sequence belongs to the alkB family. Requires Fe(2+) as cofactor.

The protein localises to the cytoplasm. The protein resides in the nucleus. It catalyses the reaction 5-(carboxymethyl)uridine(34) in tRNA + S-adenosyl-L-methionine = 5-(2-methoxy-2-oxoethyl)uridine(34) in tRNA + S-adenosyl-L-homocysteine. Its function is as follows. Catalyzes the methylation of 5-carboxymethyl uridine to 5-methylcarboxymethyl uridine at the wobble position of the anticodon loop in tRNA via its methyltransferase domain. Catalyzes the last step in the formation of 5-methylcarboxymethyl uridine at the wobble position of the anticodon loop in target tRNA. Has a preference for tRNA(Arg) and tRNA(Glu), and does not bind tRNA(Lys). Binds tRNA and catalyzes the iron and alpha-ketoglutarate dependent hydroxylation of 5-methylcarboxymethyl uridine at the wobble position of the anticodon loop in tRNA via its dioxygenase domain, giving rise to 5-(S)-methoxycarbonylhydroxymethyluridine; has a preference for tRNA(Gly). Required for normal survival after DNA damage. May inhibit apoptosis and promote cell survival and angiogenesis. The protein is tRNA (carboxymethyluridine(34)-5-O)-methyltransferase alkbh8 (alkbh8) of Xenopus tropicalis (Western clawed frog).